Consider the following 306-residue polypeptide: Secreted RxLR effector protein 76 (306 aa).

The signal sequence occupies residues 1 to 21 (MSGAFYVFTALLLVASDQIAA). The RxLR-dEER signature appears at 48–65 (RFLRGSRDEPDNLANEER). Residues 105 to 142 (AAKAVKKRPRGAKAGRKMPRAAEAEAVKKVPRAGTAVK) form a disordered region. The span at 107-123 (KAVKKRPRGAKAGRKMP) shows a compositional bias: basic residues.

The protein belongs to the RxLR effector family.

Its subcellular location is the secreted. It localises to the host nucleus. Secreted effector that partially suppresses the host cell death induced by cell death-inducing proteins. This is Secreted RxLR effector protein 76 from Plasmopara viticola (Downy mildew of grapevine).